We begin with the raw amino-acid sequence, 232 residues long: Phosphatidylserine decarboxylase proenzyme (232 aa).

S201 serves as the catalytic Schiff-base intermediate with substrate; via pyruvic acid. S201 is subject to Pyruvic acid (Ser); by autocatalysis.

This sequence belongs to the phosphatidylserine decarboxylase family. PSD-A subfamily. Heterodimer of a large membrane-associated beta subunit and a small pyruvoyl-containing alpha subunit. It depends on pyruvate as a cofactor. Is synthesized initially as an inactive proenzyme. Formation of the active enzyme involves a self-maturation process in which the active site pyruvoyl group is generated from an internal serine residue via an autocatalytic post-translational modification. Two non-identical subunits are generated from the proenzyme in this reaction, and the pyruvate is formed at the N-terminus of the alpha chain, which is derived from the carboxyl end of the proenzyme. The post-translation cleavage follows an unusual pathway, termed non-hydrolytic serinolysis, in which the side chain hydroxyl group of the serine supplies its oxygen atom to form the C-terminus of the beta chain, while the remainder of the serine residue undergoes an oxidative deamination to produce ammonia and the pyruvoyl prosthetic group on the alpha chain.

It is found in the cell membrane. It catalyses the reaction a 1,2-diacyl-sn-glycero-3-phospho-L-serine + H(+) = a 1,2-diacyl-sn-glycero-3-phosphoethanolamine + CO2. The protein operates within phospholipid metabolism; phosphatidylethanolamine biosynthesis; phosphatidylethanolamine from CDP-diacylglycerol: step 2/2. Catalyzes the formation of phosphatidylethanolamine (PtdEtn) from phosphatidylserine (PtdSer). The sequence is that of Phosphatidylserine decarboxylase proenzyme from Mycolicibacterium smegmatis (strain ATCC 700084 / mc(2)155) (Mycobacterium smegmatis).